A 37-amino-acid polypeptide reads, in one-letter code: MKVRSSVKKMCDKCRVIRRHGKVMVICANPKHKQRQG.

The protein belongs to the bacterial ribosomal protein bL36 family.

This chain is Large ribosomal subunit protein bL36, found in Synechococcus sp. (strain CC9605).